A 31-amino-acid chain; its full sequence is Cyclotide psybry B (31 aa).

A cross-link (cyclopeptide (Gly-Asn)) is located at residues glycine 1–asparagine 31. Intrachain disulfides connect cysteine 5–cysteine 20, cysteine 9–cysteine 22, and cysteine 15–cysteine 28.

Post-translationally, this is a cyclic peptide.

Functionally, probably participates in a plant defense mechanism. The sequence is that of Cyclotide psybry B from Psychotria brachyceras.